A 263-amino-acid polypeptide reads, in one-letter code: 3-methyl-2-oxobutanoate hydroxymethyltransferase (263 aa).

Asp-45 and Asp-84 together coordinate Mg(2+). Residues 45–46 (DS), Asp-84, and Lys-112 contribute to the 3-methyl-2-oxobutanoate site. Glu-114 contributes to the Mg(2+) binding site. Catalysis depends on Glu-181, which acts as the Proton acceptor.

The protein belongs to the PanB family. As to quaternary structure, homodecamer; pentamer of dimers. Requires Mg(2+) as cofactor.

The protein localises to the cytoplasm. It carries out the reaction 3-methyl-2-oxobutanoate + (6R)-5,10-methylene-5,6,7,8-tetrahydrofolate + H2O = 2-dehydropantoate + (6S)-5,6,7,8-tetrahydrofolate. The protein operates within cofactor biosynthesis; (R)-pantothenate biosynthesis; (R)-pantoate from 3-methyl-2-oxobutanoate: step 1/2. Its function is as follows. Catalyzes the reversible reaction in which hydroxymethyl group from 5,10-methylenetetrahydrofolate is transferred onto alpha-ketoisovalerate to form ketopantoate. The chain is 3-methyl-2-oxobutanoate hydroxymethyltransferase from Buchnera aphidicola subsp. Schizaphis graminum (strain Sg).